The sequence spans 50 residues: Tubulin alpha chain (50 aa).

Asn-28 contacts GTP. The active site involves Glu-40.

It belongs to the tubulin family. In terms of assembly, dimer of alpha and beta chains. A typical microtubule is a hollow water-filled tube with an outer diameter of 25 nm and an inner diameter of 15 nM. Alpha-beta heterodimers associate head-to-tail to form protofilaments running lengthwise along the microtubule wall with the beta-tubulin subunit facing the microtubule plus end conferring a structural polarity. Microtubules usually have 13 protofilaments but different protofilament numbers can be found in some organisms and specialized cells. Mg(2+) serves as cofactor.

It is found in the cytoplasm. It localises to the cytoskeleton. It carries out the reaction GTP + H2O = GDP + phosphate + H(+). In terms of biological role, tubulin is the major constituent of microtubules, a cylinder consisting of laterally associated linear protofilaments composed of alpha- and beta-tubulin heterodimers. Microtubules grow by the addition of GTP-tubulin dimers to the microtubule end, where a stabilizing cap forms. Below the cap, tubulin dimers are in GDP-bound state, owing to GTPase activity of alpha-tubulin. This is Tubulin alpha chain from Populus euphratica (Euphrates poplar).